We begin with the raw amino-acid sequence, 279 residues long: Ribosomal RNA small subunit methyltransferase A (279 aa).

S-adenosyl-L-methionine is bound by residues histidine 12, leucine 14, glycine 39, glutamate 60, aspartate 81, and asparagine 118.

The protein belongs to the class I-like SAM-binding methyltransferase superfamily. rRNA adenine N(6)-methyltransferase family. RsmA subfamily.

It is found in the cytoplasm. It carries out the reaction adenosine(1518)/adenosine(1519) in 16S rRNA + 4 S-adenosyl-L-methionine = N(6)-dimethyladenosine(1518)/N(6)-dimethyladenosine(1519) in 16S rRNA + 4 S-adenosyl-L-homocysteine + 4 H(+). In terms of biological role, specifically dimethylates two adjacent adenosines (A1518 and A1519) in the loop of a conserved hairpin near the 3'-end of 16S rRNA in the 30S particle. May play a critical role in biogenesis of 30S subunits. The sequence is that of Ribosomal RNA small subunit methyltransferase A from Polaromonas naphthalenivorans (strain CJ2).